A 345-amino-acid polypeptide reads, in one-letter code: tRNA N6-adenosine threonylcarbamoyltransferase (345 aa).

His-109 and His-113 together coordinate Fe cation. Residues 136 to 140 (TVSGG), Asp-169, Gly-182, Asp-186, and Asn-284 contribute to the substrate site. Asp-312 contributes to the Fe cation binding site.

Belongs to the KAE1 / TsaD family. Fe(2+) is required as a cofactor.

The protein localises to the cytoplasm. It catalyses the reaction L-threonylcarbamoyladenylate + adenosine(37) in tRNA = N(6)-L-threonylcarbamoyladenosine(37) in tRNA + AMP + H(+). Functionally, required for the formation of a threonylcarbamoyl group on adenosine at position 37 (t(6)A37) in tRNAs that read codons beginning with adenine. Is involved in the transfer of the threonylcarbamoyl moiety of threonylcarbamoyl-AMP (TC-AMP) to the N6 group of A37, together with TsaE and TsaB. TsaD likely plays a direct catalytic role in this reaction. This Prosthecochloris aestuarii (strain DSM 271 / SK 413) protein is tRNA N6-adenosine threonylcarbamoyltransferase.